The sequence spans 495 residues: PXA domain protein 1 (495 aa).

Positions 1–174 constitute a PXA domain; the sequence is MAKLSSLLNP…KFIIYLSKAI (174 aa). A run of 2 helical transmembrane segments spans residues 7-27 and 235-255; these read LLNPIISKILEIYVYSWYSGI and WFFFYTLLYPWIALVSAFVAE. Polar residues-rich tracts occupy residues 402–419 and 427–436; these read AVSSPTKANTNKSHQRSF and DSQTPSENSA. Residues 402 to 436 form a disordered region; it reads AVSSPTKANTNKSHQRSFSIPKATKDSQTPSENSA. The helical transmembrane segment at 446 to 466 threads the bilayer; sequence AYSQIPVIPFFLPSDKLIMLV.

It localises to the endosome membrane. In terms of biological role, required for required for normal vacuolar morphology and for vacuolar protein transport. Also required for endosome-to-Golgi protein transport. This Schizosaccharomyces pombe (strain 972 / ATCC 24843) (Fission yeast) protein is PXA domain protein 1 (pxa1).